The chain runs to 270 residues: tRNA pseudouridine synthase A (270 aa).

The Nucleophile role is filled by aspartate 55. Tyrosine 110 serves as a coordination point for substrate.

This sequence belongs to the tRNA pseudouridine synthase TruA family.

It catalyses the reaction uridine(38/39/40) in tRNA = pseudouridine(38/39/40) in tRNA. Formation of pseudouridine at positions 38, 39 and 40 in the anticodon stem and loop of transfer RNAs. This Methanoculleus marisnigri (strain ATCC 35101 / DSM 1498 / JR1) protein is tRNA pseudouridine synthase A.